We begin with the raw amino-acid sequence, 111 residues long: Putative carnobacteriocin-B2 immunity protein (111 aa).

Functionally, could impart immunity to carnobacteriocin-B2 to naturally sensitive host strains. This chain is Putative carnobacteriocin-B2 immunity protein, found in Carnobacterium maltaromaticum (Carnobacterium piscicola).